Consider the following 575-residue polypeptide: CCR4-NOT transcription complex subunit 4 (575 aa).

The segment at 14–57 (CPLCMEPLEIDDINFFPCTCGYQICRFCWHRIRTDENGLCPACR) adopts an RING-type; degenerate zinc-finger fold. Residues 68 to 104 (KPLSQEELQRIKNEKKQKQNERKQKISENRKHLASVR) are a coiled coil. Phosphoserine is present on Ser71. Residues 109–189 (NLVFVVGLSQ…VVDGRTLKAS (81 aa)) enclose the RRM domain. The C3H1-type zinc finger occupies 190 to 217 (LGTTKYCSYFLKNMQCPKPDCMYLHELG). Disordered regions lie at residues 256-372 (TGSV…EPQS) and 424-458 (SVQD…HPAA). Positions 281–299 (DSLSIGNGDNSQQISNSDT) are enriched in polar residues. A Phosphoserine modification is found at Ser301. The segment covering 307–322 (SKSNPVIPISSSNHSA) has biased composition (polar residues). The residue at position 324 (Ser324) is a Phosphoserine. Positions 345-356 (NPIPSGLPPFPS) are enriched in pro residues. Residues 428 to 441 (QPSLSPTSLQNSSS) are compositionally biased toward low complexity. Ser432 carries the post-translational modification Phosphoserine. 2 positions are modified to asymmetric dimethylarginine: Arg475 and Arg483. Residue Ser490 is modified to Phosphoserine. At Arg497 the chain carries Asymmetric dimethylarginine. The disordered stretch occupies residues 553–575 (PLSTSSHSLQQGQQPTSLHTTVA).

As to quaternary structure, interacts with CNOT1 via its C-terminus but does not stably associate with the CCR4-NOT complex. Interacts (via RING domain) with UBE2D2. Interacts with ABCE1, PINK1 and PELO. Post-translationally, autoubiquitinated.

The protein resides in the cytoplasm. It localises to the nucleus. The enzyme catalyses S-ubiquitinyl-[E2 ubiquitin-conjugating enzyme]-L-cysteine + [acceptor protein]-L-lysine = [E2 ubiquitin-conjugating enzyme]-L-cysteine + N(6)-ubiquitinyl-[acceptor protein]-L-lysine.. It participates in protein modification; protein ubiquitination. Functionally, has E3 ubiquitin ligase activity, promoting ubiquitination and degradation of target proteins. Involved in activation of the JAK/STAT pathway. Catalyzes ubiquitination of methylated RBM15. Plays a role in quality control of translation of mitochondrial outer membrane-localized mRNA. As part of the PINK1-regulated signaling, upon mitochondria damage, ubiquitinates ABCE1 and thereby recruits autophagy receptors to the mitochondrial outer membrane to initiate mitophagy. The protein is CCR4-NOT transcription complex subunit 4 (CNOT4) of Homo sapiens (Human).